Reading from the N-terminus, the 547-residue chain is Chaperonin GroEL (547 aa).

ATP contacts are provided by residues 30 to 33 (TLGP), Lys51, 87 to 91 (DGTTT), Gly415, and Asp495. Residues 525–547 (PDEKEAGGGAPDMGGMGGMGGMM) are disordered. Residues 531-547 (GGGAPDMGGMGGMGGMM) show a composition bias toward gly residues.

Belongs to the chaperonin (HSP60) family. As to quaternary structure, forms a cylinder of 14 subunits composed of two heptameric rings stacked back-to-back. Interacts with the co-chaperonin GroES.

The protein localises to the cytoplasm. The enzyme catalyses ATP + H2O + a folded polypeptide = ADP + phosphate + an unfolded polypeptide.. Functionally, together with its co-chaperonin GroES, plays an essential role in assisting protein folding. The GroEL-GroES system forms a nano-cage that allows encapsulation of the non-native substrate proteins and provides a physical environment optimized to promote and accelerate protein folding. This Chromohalobacter salexigens (strain ATCC BAA-138 / DSM 3043 / CIP 106854 / NCIMB 13768 / 1H11) protein is Chaperonin GroEL.